Consider the following 299-residue polypeptide: Methionyl-tRNA formyltransferase (299 aa).

Residue 109-112 (SLLP) coordinates (6S)-5,6,7,8-tetrahydrofolate.

Belongs to the Fmt family.

It catalyses the reaction L-methionyl-tRNA(fMet) + (6R)-10-formyltetrahydrofolate = N-formyl-L-methionyl-tRNA(fMet) + (6S)-5,6,7,8-tetrahydrofolate + H(+). In terms of biological role, attaches a formyl group to the free amino group of methionyl-tRNA(fMet). The formyl group appears to play a dual role in the initiator identity of N-formylmethionyl-tRNA by promoting its recognition by IF2 and preventing the misappropriation of this tRNA by the elongation apparatus. The chain is Methionyl-tRNA formyltransferase from Wolbachia sp. subsp. Drosophila simulans (strain wRi).